A 1040-amino-acid chain; its full sequence is Contactin-2 (1040 aa).

The signal sequence occupies residues 1-30; sequence MGTATRRKPHLLLVAAVALVSSSAWSSALG. Ig-like C2-type domains follow at residues 43–128, 133–222, 239–322, 327–411, 417–504, and 509–603; these read PLSV…AILR, QEFS…SVFS, PSIK…GRII, PEWL…AELA, PDFR…GILS, and TKIT…ATVL. Intrachain disulfides connect cysteine 61–cysteine 111, cysteine 155–cysteine 207, cysteine 261–cysteine 306, and cysteine 348–cysteine 395. N-linked (GlcNAc...) asparagine glycosylation is found at asparagine 76, asparagine 198, and asparagine 204. N-linked (GlcNAc...) asparagine glycosylation is found at asparagine 461, asparagine 477, asparagine 498, and asparagine 525. 4 consecutive Fibronectin type-III domains span residues 610 to 708, 713 to 810, 815 to 910, and 915 to 1006; these read PPGG…TREA, APSG…SAEE, APTK…TMKP, and PPGN…NGGT. The interval 694 to 720 is disordered; sequence GEPSGPSSKIRTREAAPSVAPSGLSGG. The short motif at 794–796 is the Cell attachment site element; that stretch reads RGD. Residues asparagine 830, asparagine 904, asparagine 918, and asparagine 940 are each glycosylated (N-linked (GlcNAc...) asparagine). The interval 894-919 is disordered; it reads AGTGPASPSANATTMKPPPRRPPGNI. Asparagine 1012 carries GPI-anchor amidated asparagine lipidation. The propeptide at 1013-1040 is removed in mature form; the sequence is MAVRPAPHPGTVISHSVAMLILIGSLEL.

It belongs to the immunoglobulin superfamily. Contactin family.

It is found in the cell membrane. Functionally, in conjunction with another transmembrane protein, CNTNAP2, contributes to the organization of axonal domains at nodes of Ranvier by maintaining voltage-gated potassium channels at the juxtaparanodal region. May be involved in cell adhesion. In Homo sapiens (Human), this protein is Contactin-2 (CNTN2).